Consider the following 379-residue polypeptide: UDP-4-amino-4-deoxy-L-arabinose--oxoglutarate aminotransferase (379 aa).

Lysine 182 bears the N6-(pyridoxal phosphate)lysine mark.

The protein belongs to the DegT/DnrJ/EryC1 family. ArnB subfamily. As to quaternary structure, homodimer. Requires pyridoxal 5'-phosphate as cofactor.

It catalyses the reaction UDP-4-amino-4-deoxy-beta-L-arabinose + 2-oxoglutarate = UDP-beta-L-threo-pentopyranos-4-ulose + L-glutamate. It participates in nucleotide-sugar biosynthesis; UDP-4-deoxy-4-formamido-beta-L-arabinose biosynthesis; UDP-4-deoxy-4-formamido-beta-L-arabinose from UDP-alpha-D-glucuronate: step 2/3. The protein operates within bacterial outer membrane biogenesis; lipopolysaccharide biosynthesis. Its function is as follows. Catalyzes the conversion of UDP-4-keto-arabinose (UDP-Ara4O) to UDP-4-amino-4-deoxy-L-arabinose (UDP-L-Ara4N). The modified arabinose is attached to lipid A and is required for resistance to polymyxin and cationic antimicrobial peptides. In Enterobacter sp. (strain 638), this protein is UDP-4-amino-4-deoxy-L-arabinose--oxoglutarate aminotransferase.